Consider the following 284-residue polypeptide: 4-diphosphocytidyl-2-C-methyl-D-erythritol kinase (284 aa).

The active site involves K9. 90 to 100 (PLVSGLGGDSS) provides a ligand contact to ATP. D132 is a catalytic residue.

Belongs to the GHMP kinase family. IspE subfamily.

The enzyme catalyses 4-CDP-2-C-methyl-D-erythritol + ATP = 4-CDP-2-C-methyl-D-erythritol 2-phosphate + ADP + H(+). Its pathway is isoprenoid biosynthesis; isopentenyl diphosphate biosynthesis via DXP pathway; isopentenyl diphosphate from 1-deoxy-D-xylulose 5-phosphate: step 3/6. Functionally, catalyzes the phosphorylation of the position 2 hydroxy group of 4-diphosphocytidyl-2C-methyl-D-erythritol. The sequence is that of 4-diphosphocytidyl-2-C-methyl-D-erythritol kinase from Dehalococcoides mccartyi (strain ATCC BAA-2266 / KCTC 15142 / 195) (Dehalococcoides ethenogenes (strain 195)).